A 265-amino-acid chain; its full sequence is Putative methyltransferase 235L (265 aa).

Positions 1 to 17 (MDICICYFFTILTTISC) are cleaved as a signal peptide.

This sequence belongs to the methyltransferase superfamily.

The sequence is that of Putative methyltransferase 235L from Acheta domesticus (House cricket).